A 247-amino-acid polypeptide reads, in one-letter code: Protein GrpE (247 aa).

Disordered regions lie at residues 1–64 and 214–247; these read MNDE…QALD and SMGP…EKSD. Composition is skewed to polar residues over residues 30–39, 49–63, and 228–241; these read DEPSLSNVAE, DVTS…SQAL, and TEQS…TDQQ.

The protein belongs to the GrpE family. Homodimer.

The protein resides in the cytoplasm. Participates actively in the response to hyperosmotic and heat shock by preventing the aggregation of stress-denatured proteins, in association with DnaK and GrpE. It is the nucleotide exchange factor for DnaK and may function as a thermosensor. Unfolded proteins bind initially to DnaJ; upon interaction with the DnaJ-bound protein, DnaK hydrolyzes its bound ATP, resulting in the formation of a stable complex. GrpE releases ADP from DnaK; ATP binding to DnaK triggers the release of the substrate protein, thus completing the reaction cycle. Several rounds of ATP-dependent interactions between DnaJ, DnaK and GrpE are required for fully efficient folding. The protein is Protein GrpE of Prochlorococcus marinus (strain MIT 9211).